The chain runs to 322 residues: MDSDFVPPSVSFQLPVIDFSDQNLKPGSSKWDEVTADVLKALEDYGCFEASFDKLSVELNRSVFEAMEDLFELPIPTKQRNVSSKPFHGYLCHNLYESLGINDANVLEKVNDFTQQLWPDHGNKSISETIHLFSEQLVELDLMVRRMIMESFGIENYIDEHLNSTYYLTRLMKYTSPPDDDDDDDEETKLGLRSHTDKNIITILHQYQVDGLEVKTKDDKWIKVKPSQDSVLVMVGDSLCALLNGRLHSPYHRVIMTGKKTRYSTGLFSIPKTGVIIDSPEELVDKEHPRIFKPFEYTDFLHFFQTEAGRIAQSALHAFAAF.

The Fe2OG dioxygenase domain occupies T165–P271. Fe cation contacts are provided by H195, D197, and H252. Position 262 (R262) interacts with 2-oxoglutarate.

It belongs to the iron/ascorbate-dependent oxidoreductase family. It depends on Fe(2+) as a cofactor.

In terms of biological role, probable 2-oxoglutarate-dependent dioxygenase that may be involved in glucosinolates biosynthesis. May play a role in the production of aliphatic glucosinolates. This chain is Probable 2-oxoglutarate-dependent dioxygenase AOP1 (AOP1), found in Arabidopsis thaliana (Mouse-ear cress).